The chain runs to 648 residues: Bifunctional protein TilS/HprT (648 aa).

29 to 34 (SGGPDS) contacts ATP. Residue Asp-627 participates in Mg(2+) binding.

This sequence in the N-terminal section; belongs to the tRNA(Ile)-lysidine synthase family. The protein in the C-terminal section; belongs to the purine/pyrimidine phosphoribosyltransferase family. Mg(2+) serves as cofactor.

Its subcellular location is the cytoplasm. It carries out the reaction IMP + diphosphate = hypoxanthine + 5-phospho-alpha-D-ribose 1-diphosphate. The catalysed reaction is GMP + diphosphate = guanine + 5-phospho-alpha-D-ribose 1-diphosphate. The enzyme catalyses cytidine(34) in tRNA(Ile2) + L-lysine + ATP = lysidine(34) in tRNA(Ile2) + AMP + diphosphate + H(+). Its function is as follows. Ligates lysine onto the cytidine present at position 34 of the AUA codon-specific tRNA(Ile) that contains the anticodon CAU, in an ATP-dependent manner. Cytidine is converted to lysidine, thus changing the amino acid specificity of the tRNA from methionine to isoleucine. In Listeria monocytogenes serovar 1/2a (strain ATCC BAA-679 / EGD-e), this protein is Bifunctional protein TilS/HprT (tilS/hprT).